A 454-amino-acid polypeptide reads, in one-letter code: tRNA modification GTPase MnmE (454 aa).

(6S)-5-formyl-5,6,7,8-tetrahydrofolate-binding residues include Arg-23, Glu-80, and Lys-120. Residues 216-377 (GMKVVIAGRP…LRNHLKQSMG (162 aa)) enclose the TrmE-type G domain. Asn-226 contacts K(+). Residues 226–231 (NAGKSS), 245–251 (TDIAGTT), 270–273 (DTAG), 335–338 (NKAD), and 358–360 (SAR) each bind GTP. Ser-230 is a binding site for Mg(2+). Residues Thr-245, Ile-247, and Thr-250 each coordinate K(+). A Mg(2+)-binding site is contributed by Thr-251. Lys-454 is a binding site for (6S)-5-formyl-5,6,7,8-tetrahydrofolate.

Belongs to the TRAFAC class TrmE-Era-EngA-EngB-Septin-like GTPase superfamily. TrmE GTPase family. In terms of assembly, homodimer. Heterotetramer of two MnmE and two MnmG subunits. K(+) serves as cofactor.

It localises to the cytoplasm. Its function is as follows. Exhibits a very high intrinsic GTPase hydrolysis rate. Involved in the addition of a carboxymethylaminomethyl (cmnm) group at the wobble position (U34) of certain tRNAs, forming tRNA-cmnm(5)s(2)U34. This is tRNA modification GTPase MnmE from Enterobacter sp. (strain 638).